Consider the following 256-residue polypeptide: MGGFERRGVRQYNRSEVPRMRWTEEMHRQFVEAVECLGGQDEATPKRILQLMGVKGVSISHIKSHLQMYRSGSSNSNHPVSLQKLTSATVNNISKREFVNSEDRCIYASGDRNTASSDKNTYTILRCGRSSMPSIEEIFRNWEQTRGRLLPWNSNVITTEQATTRASRQTTNYSKPLKQLTDCDLTLSIGQLWDDAAGSDADGSSTISEEVAAPSRDEAFVSSADDHFAAAAAKKESNMLTTDLNLDLTISSSWLS.

The HTH myb-type domain occupies 14–74 (RSEVPRMRWT…HLQMYRSGSS (61 aa)). The segment at residues 45-70 (PKRILQLMGVKGVSISHIKSHLQMYR) is a DNA-binding region (H-T-H motif).

In terms of tissue distribution, highly expressed in the pulvinus and stem nodes. Expressed in the plumule of germinating seeds, coleoptile, leaves, internodes, leave sheaths, spikes and roots.

It is found in the nucleus. Functionally, probable transcription factor involved in the regulation of plant height by elongating internode cell length. Involved in the positive regulation of grain yield. May be involved in the regulation of genes related to cell elongation and cell wall synthesis, which are associated with plant height and yield phenotypes. Plays a role in tolerance to cadmium stress. In Oryza sativa subsp. japonica (Rice), this protein is Myb family transcription factor MPH1.